A 121-amino-acid polypeptide reads, in one-letter code: Ribonuclease P protein component (121 aa).

Belongs to the RnpA family. Consists of a catalytic RNA component (M1 or rnpB) and a protein subunit.

The enzyme catalyses Endonucleolytic cleavage of RNA, removing 5'-extranucleotides from tRNA precursor.. In terms of biological role, RNaseP catalyzes the removal of the 5'-leader sequence from pre-tRNA to produce the mature 5'-terminus. It can also cleave other RNA substrates such as 4.5S RNA. The protein component plays an auxiliary but essential role in vivo by binding to the 5'-leader sequence and broadening the substrate specificity of the ribozyme. In Neisseria meningitidis serogroup B (strain ATCC BAA-335 / MC58), this protein is Ribonuclease P protein component.